A 455-amino-acid chain; its full sequence is MTNFSRSKSTGTIGFPEFKPTRPGPDKYENIHNDDDEYEEGHSTTSTDYYDASTPLSSHASRSGNGSGSGQLTVVDLLAAVLRKSLVMSCAMERGEDDVVASMDIGWPTEVKHVSHVTFDRFNGFLGLPSELEPEVPPRAPSASVSVFGVSAKSMQCSYDDRGNSVPTILLRMQKRLYTEGGLKAEGIFRINPDNGKEEHVRRQLNCGVVPRGIDVHCLAGLIKAWFRELPTGVLDVLTPEQVMRCNTEEDCSRLVILLPPVESAILDWAIGLMADVVEHEQFNKMNARNVAMVFAPNMTQMADPLTALIHAVQVMNFLKTLILMNLKERENADAKARWLKKQTSDPSEEWESQHSEILSPEKPNNNNPKFLRVATLCRLEADNEEEFWNIKKRNDHEGVLDTSSGNGNIGPVQRLCKHPLFQLSKSTKKAFVSNRDEGRKGREAWSSRLSSLPW.

Positions 1 to 12 are enriched in polar residues; sequence MTNFSRSKSTGT. Positions 1-68 are disordered; the sequence is MTNFSRSKST…HASRSGNGSG (68 aa). Positions 24 to 33 are enriched in basic and acidic residues; sequence GPDKYENIHN. Low complexity predominate over residues 43 to 54; it reads STTSTDYYDAST. Over residues 55-64 the composition is skewed to polar residues; that stretch reads PLSSHASRSG. In terms of domain architecture, CRIB spans 105–118; sequence IGWPTEVKHVSHVT. Positions 153–331 constitute a Rho-GAP domain; it reads KSMQCSYDDR…LILMNLKERE (179 aa). 2 disordered regions span residues 342–366 and 432–455; these read KQTSDPSEEWESQHSEILSPEKPNN and FVSNRDEGRKGREAWSSRLSSLPW. Residues 435–446 are compositionally biased toward basic and acidic residues; it reads NRDEGRKGREAW.

Expressed in differentiating xylem cells.

It is found in the cell membrane. Functionally, acts as a GTPase activator for the Rac-type GTPase by converting it to an inactive GDP-bound state. Involved in secondary wall pattern formation. In association with ROPGEF4, mediates local activation of ARAC10/ROP11 to initiate the distinct pattern of secondary cell walls in xylem cells. In Arabidopsis thaliana (Mouse-ear cress), this protein is Rho GTPase-activating protein 3 (ROPGAP3).